Consider the following 561-residue polypeptide: Ankyrin repeat protein OPG189 (561 aa).

ANK repeat units lie at residues 68 to 98 (YGEN…NINK), 172 to 208 (YGCT…DVDK), 212 to 242 (YGNT…NIDS), 246 to 275 (NGYT…NVNA), 279 to 307 (FGTT…ELEI), 342 to 371 (YNET…DFET), and 375 to 404 (SGCT…SLKI).

Belongs to the orthopoxvirus OPG189 protein family.

Its function is as follows. Contributes to viral release without involving rearrangement of host actin. The polypeptide is Ankyrin repeat protein OPG189 (OPG189) (Cynomys gunnisoni (Gunnison's prairie dog)).